The chain runs to 127 residues: Major sperm protein 63 (127 aa).

Ala-2 is modified (N-acetylalanine). Positions 9–126 (DIQTQPGTKI…RRKNLPIEYN (118 aa)) constitute an MSP domain.

Sperm.

It localises to the cell projection. It is found in the pseudopodium. The protein resides in the cytoplasm. The protein localises to the cytoskeleton. Its function is as follows. Central component in molecular interactions underlying sperm crawling. Forms an extensive filament system that extends from sperm villipoda, along the leading edge of the pseudopod. This chain is Major sperm protein 63 (msp-63), found in Caenorhabditis elegans.